The primary structure comprises 276 residues: Hydroxyethylthiazole kinase (276 aa).

Methionine 48 contacts substrate. Arginine 124 and threonine 175 together coordinate ATP. Position 202 (glycine 202) interacts with substrate.

Belongs to the Thz kinase family. Requires Mg(2+) as cofactor.

It catalyses the reaction 5-(2-hydroxyethyl)-4-methylthiazole + ATP = 4-methyl-5-(2-phosphooxyethyl)-thiazole + ADP + H(+). The protein operates within cofactor biosynthesis; thiamine diphosphate biosynthesis; 4-methyl-5-(2-phosphoethyl)-thiazole from 5-(2-hydroxyethyl)-4-methylthiazole: step 1/1. In terms of biological role, catalyzes the phosphorylation of the hydroxyl group of 4-methyl-5-beta-hydroxyethylthiazole (THZ). In Clostridium beijerinckii (strain ATCC 51743 / NCIMB 8052) (Clostridium acetobutylicum), this protein is Hydroxyethylthiazole kinase.